Here is a 475-residue protein sequence, read N- to C-terminus: PRAME family member 20 (475 aa).

The stretch at 97 to 124 (RWKLQVLDLQDVSENFWMVWSEAMARRC) is one LRR 1; degenerate repeat. Residues 179 to 203 (HLCCKKLKMLGMLFHNIRNILKTVN) form an LRR 2; degenerate repeat. The stretch at 204 to 230 (LDCIQEVEVNCNWTLPVLAEFTPYLGQ) is one LRR 3; degenerate repeat. An LRR 4; degenerate repeat occupies 231-265 (MRNLRKLVLSDIDSRYISPEQKKEFVTQFTTQFLK). LRR repeat units lie at residues 266–291 (LRCL…LSCL), 292–323 (KTSL…GQLK), 324–342 (TLDL…PLQV), 348–375 (AATL…ALSR), and 376–400 (CFEL…LLCH).

This sequence belongs to the PRAME family.

The protein is PRAME family member 20 of Homo sapiens (Human).